A 209-amino-acid chain; its full sequence is Small ribosomal subunit protein uS3 (209 aa).

Residues Ile38–Lys107 form the KH type-2 domain.

This sequence belongs to the universal ribosomal protein uS3 family. As to quaternary structure, part of the 30S ribosomal subunit. Forms a tight complex with proteins S10 and S14.

Functionally, binds the lower part of the 30S subunit head. Binds mRNA in the 70S ribosome, positioning it for translation. The polypeptide is Small ribosomal subunit protein uS3 (Pseudothermotoga lettingae (strain ATCC BAA-301 / DSM 14385 / NBRC 107922 / TMO) (Thermotoga lettingae)).